The chain runs to 245 residues: Thiopurine S-methyltransferase (245 aa).

Ser14 carries the post-translational modification Phosphoserine. 29–40 (WQDKWVNGKTAF) contacts S-adenosyl-L-methionine. Residue Phe40 participates in substrate binding. N6-acetyllysine is present on Lys58. S-adenosyl-L-methionine-binding positions include Leu69, Glu90, 134–135 (SI), and Arg152.

Belongs to the class I-like SAM-binding methyltransferase superfamily. TPMT family. In terms of assembly, monomer.

It is found in the cytoplasm. The catalysed reaction is S-adenosyl-L-methionine + a thiopurine = S-adenosyl-L-homocysteine + a thiopurine S-methylether.. This is Thiopurine S-methyltransferase (TPMT) from Gorilla gorilla gorilla (Western lowland gorilla).